The sequence spans 262 residues: Oxidoreductase GME11367 (262 aa).

Belongs to the avfA family.

The protein operates within secondary metabolite biosynthesis. Oxidoreductase; part of the gene cluster that mediates the biosynthesis of dibenzodioxocinones such as pestalotiollide B, a novel class of inhibitors against cholesterol ester transfer protein (CEPT). The biosynthesis initiates from condensation of acetate and malonate units catalyzed by the non-reducing PKS pks8/GME11356. Pks8/GME11356 lacks a thioesterase (TE) domain, which is important to the cyclizing of the third ring of atrochrysone carboxylic acid, and the esterase GME11355 might play the role of TE and catalyzes the cyclization reaction of the C ring. The lactamase-like protein GME11357 (or other beta-lactamases in Pestalotiopsis microspora) probably hydrolyzes the thioester bond between the ACP of pks8/GME11356 and the intermediate to release atrochrysone carboxylic acid, which is spontaneously dehydrates to form endocrocin anthrone. Endocrocin anthrone is further converted to emodin via the endocrocin intermediate. Emodin is then oxidized by several enzymes such as the Baeyer-Villiger oxidase GME11358, the oxidoreductase GME11367, the short chain dehydrogenase/reductase GME11373, as well as by other oxidoreductases from the cluster, to modify the A and C rings and open the B ring, and finally yield monodictyphenone. The prenyltransferase GME11375 may catalyze the addition reaction between the C5 side chains and the carbon bone of dibenzodioxocinones. The remaining biochemical reactions to the final product dibenzodioxocinones should be methylation catalyzed by methyltransferase GME11366 and reduction and lactonization reaction catalyzed by a series of oxidordeuctases. The sequence is that of Oxidoreductase GME11367 from Pestalotiopsis microspora.